Reading from the N-terminus, the 284-residue chain is 4-diphosphocytidyl-2-C-methyl-D-erythritol kinase (284 aa).

The active site involves Lys22. 104 to 114 (PVGAGLGGASS) is an ATP binding site. The active site involves Asp146.

This sequence belongs to the GHMP kinase family. IspE subfamily.

The enzyme catalyses 4-CDP-2-C-methyl-D-erythritol + ATP = 4-CDP-2-C-methyl-D-erythritol 2-phosphate + ADP + H(+). The protein operates within isoprenoid biosynthesis; isopentenyl diphosphate biosynthesis via DXP pathway; isopentenyl diphosphate from 1-deoxy-D-xylulose 5-phosphate: step 3/6. In terms of biological role, catalyzes the phosphorylation of the position 2 hydroxy group of 4-diphosphocytidyl-2C-methyl-D-erythritol. The chain is 4-diphosphocytidyl-2-C-methyl-D-erythritol kinase from Hydrogenobaculum sp. (strain Y04AAS1).